A 173-amino-acid polypeptide reads, in one-letter code: Co-chaperone protein HscB homolog (173 aa).

Residues 5–77 (CHYALFDLQP…PRRARYLLAI (73 aa)) enclose the J domain.

Belongs to the HscB family. Interacts with HscA and stimulates its ATPase activity.

Co-chaperone involved in the maturation of iron-sulfur cluster-containing proteins. Seems to help targeting proteins to be folded toward HscA. This Pseudomonas putida (strain GB-1) protein is Co-chaperone protein HscB homolog.